A 748-amino-acid polypeptide reads, in one-letter code: MALPMLPGNSVNRNLGKDKFHKSQHFDYSNGVAMMVGTEKPGIGGDLLLGQSARAKYSRFPKGEGSGAPAWLAFDKQVLCFDAYFNEAVPQRREEKYRVRKCKIYFYLEDDTIQVVEPEFKNSGIPQGTLIRRHRIPLPAPKDDCFYNVHHFNINQEVLFYSRNFMITDCDPFTRNFLVKMGVRLNPPASTPADPYTTLRQELEENMKPLRPYERLDTLKQFLEHDRQVLRFYCYWDDSESMFGDPRELILHYFLADDTMEMYEVVPPNSGRDTVPKFLHRGKLPKHAPIPKRQPGEITDRTVLNVFGPVGQGGPYILDSLKTGALEEEFYKDSDLTIGAVINVWGRRVLICDCDYFTKEYYRSKYGIEDFPSISYKASPPPKPAKQVPPYTGFGSEEDSLCSCQGLLPKPPQKDFKKLMEKDRRGLVSNVLRFVGKMLTDSPVDKERVFIICFYLTDDTIAVFEPPQRNSGVIGGKFLERGRVKKPGQELFKSEMSEYFTAQDLYVGAHLLLNSQPFQLVDADDFTFSYMEQHADEFPKANIGTIISKVKSISEEQQKTVKQFFTMSDPSSTGSLPYESFRTLLADLDVELSEHEIMTLGRVYSVRQQPEVNVGLMLAVAQDHLKKKNFEKFSEMIQAFTHEDRDRCGQLSSKEARIICKAFRLPLSDDLLRALLEKFAGESEKIDYHAFLSGINWRENPVPAVLPEDTVKFDADWRGEAPEPAVKTINYSLLLEDVFGSATNINDS.

DM10 domains follow at residues 75–182 (DKQV…VKMG), 226–366 (DRQV…RSKY), and 428–535 (VSNV…EQHA). EF-hand domains are found at residues 556–591 (EQQK…LDVE) and 631–666 (EKFS…FRLP).

The protein resides in the cytoplasm. It is found in the cytoskeleton. Its subcellular location is the cilium axoneme. Functionally, microtubule inner protein (MIP) part of the dynein-decorated doublet microtubules (DMTs) in cilia axoneme, which is required for motile cilia beating. The sequence is that of EF-hand domain-containing family member C2 (efhc2) from Danio rerio (Zebrafish).